The primary structure comprises 313 residues: Endo-beta-N-acetylglucosaminidase H (313 aa).

Positions 1-42 form a signal peptide, or 44; it reads MFTPVRRRVRTAALALSAAAALVLGSTAASGASATPSPAPAP. One can recognise a GH18 domain in the interval 51 to 307; it reads PTSVAYVEVN…SAFTRELYGS (257 aa). E174 serves as the catalytic Proton donor.

The protein belongs to the glycosyl hydrolase 18 family.

It carries out the reaction an N(4)-(oligosaccharide-(1-&gt;3)-[oligosaccharide-(1-&gt;6)]-beta-D-Man-(1-&gt;4)-beta-D-GlcNAc-(1-&gt;4)-alpha-D-GlcNAc)-L-asparaginyl-[protein] + H2O = an oligosaccharide-(1-&gt;3)-[oligosaccharide-(1-&gt;6)]-beta-D-Man-(1-&gt;4)-D-GlcNAc + N(4)-(N-acetyl-beta-D-glucosaminyl)-L-asparaginyl-[protein]. Functionally, cleaves asparagine-linked oligomannose and hybrid, but not complex, oligosaccharides from glycoproteins. The chain is Endo-beta-N-acetylglucosaminidase H from Streptomyces plicatus.